Consider the following 414-residue polypeptide: Nuclear hormone receptor family member nhr-213 (414 aa).

Residues 21–99 (IVLCKVCALS…LGMTPENVQF (79 aa)) constitute a DNA-binding region (nuclear receptor). 2 consecutive NR C4-type zinc fingers follow at residues 24 to 44 (CKVCALSAHGSHFGVLACRAC) and 62 to 82 (CKKGKNECPVDTAERYQCRLC). In terms of domain architecture, NR LBD spans 162–414 (SAAKKMNSLE…DFSDPDIFDC (253 aa)).

It belongs to the nuclear hormone receptor family.

It localises to the nucleus. In terms of biological role, orphan nuclear receptor. In Caenorhabditis elegans, this protein is Nuclear hormone receptor family member nhr-213 (nhr-213).